Reading from the N-terminus, the 417-residue chain is Aromatic-amino-acid aminotransferase 1 (417 aa).

Lys258 carries the post-translational modification N6-(pyridoxal phosphate)lysine.

This sequence belongs to the class-I pyridoxal-phosphate-dependent aminotransferase family. As to quaternary structure, homodimer. The cofactor is pyridoxal 5'-phosphate.

It catalyses the reaction an aromatic L-alpha-amino acid + 2-oxoglutarate = an aromatic oxo-acid + L-glutamate. Functionally, catalyzes the transamination of phenylalanine, tyrosine and tryptophan. Shows virtually no activity towards aspartic acid, alanine, valine or isoleucine. This is Aromatic-amino-acid aminotransferase 1 from Thermococcus litoralis (strain ATCC 51850 / DSM 5473 / JCM 8560 / NS-C).